Consider the following 660-residue polypeptide: Pentatricopeptide repeat-containing protein At1g03560, mitochondrial (660 aa).

The transit peptide at methionine 1 to proline 12 directs the protein to the mitochondrion. PPR repeat units lie at residues asparagine 151–methionine 185, threonine 186–proline 220, threonine 221–proline 255, aspartate 256–alanine 290, aspartate 291–valine 325, proline 326–proline 360, asparagine 361–proline 395, aspartate 396–isoleucine 430, asparagine 431–arginine 465, aspartate 466–glutamate 496, threonine 502–proline 536, threonine 537–leucine 571, alanine 574–valine 605, and proline 606–arginine 640.

This sequence belongs to the PPR family. P subfamily.

The protein localises to the mitochondrion. The chain is Pentatricopeptide repeat-containing protein At1g03560, mitochondrial from Arabidopsis thaliana (Mouse-ear cress).